The primary structure comprises 938 residues: Isoleucine--tRNA ligase (938 aa).

A 'HIGH' region motif is present at residues 58-68; that stretch reads PYANGSIHIGH. K183 carries the N6-acetyllysine modification. E561 provides a ligand contact to L-isoleucyl-5'-AMP. Positions 602-606 match the 'KMSKS' region motif; that stretch reads KMSKS. K605 provides a ligand contact to ATP. Residues C901, C904, C921, and C924 each contribute to the Zn(2+) site.

This sequence belongs to the class-I aminoacyl-tRNA synthetase family. IleS type 1 subfamily. As to quaternary structure, monomer. Zn(2+) is required as a cofactor.

The protein resides in the cytoplasm. The enzyme catalyses tRNA(Ile) + L-isoleucine + ATP = L-isoleucyl-tRNA(Ile) + AMP + diphosphate. Functionally, catalyzes the attachment of isoleucine to tRNA(Ile). As IleRS can inadvertently accommodate and process structurally similar amino acids such as valine, to avoid such errors it has two additional distinct tRNA(Ile)-dependent editing activities. One activity is designated as 'pretransfer' editing and involves the hydrolysis of activated Val-AMP. The other activity is designated 'posttransfer' editing and involves deacylation of mischarged Val-tRNA(Ile). This Shigella dysenteriae serotype 1 (strain Sd197) protein is Isoleucine--tRNA ligase.